The following is a 346-amino-acid chain: MEKNQKCATEQERFKARSGHGDGQRAEPRKTQTTTESDKDSGYSDVASECLSSVEQTDTEEGPTTSRWNVALKPSGKTPSQPQSLVVLKNLLVDQGSGPEPNASSWAVHPSIQLLQTSPQIVFFPPTVSSSKPSTCRKDTKYLPILKSYTKIAPHPSHRVSNISLPCARKRGPDERPHNQTKRQCSKGHSGSRKGMDAATLLDTGVQQGPVDQNVKESSVSAKNKELDMQLTTQNINSNEKGSRVASLDTQQNLLSAGQQNKSQRFQNTLDILHRSGLLSIAMKTKELARHNQATQSQLEKLQEQVQLYATAMSSNNPHDWQRLQDSLAEVVKGDTEDLSVREMDL.

Residues 1–42 (MEKNQKCATEQERFKARSGHGDGQRAEPRKTQTTTESDKDSG) show a composition bias toward basic and acidic residues. Disordered stretches follow at residues 1-83 (MEKN…SQPQ) and 167-228 (CARK…KELD). Polar residues predominate over residues 50 to 68 (CLSSVEQTDTEEGPTTSRW). Over residues 179–192 (NQTKRQCSKGHSGS) the composition is skewed to basic residues. Residues 205 to 222 (GVQQGPVDQNVKESSVSA) are compositionally biased toward polar residues. Residues 283-315 (MKTKELARHNQATQSQLEKLQEQVQLYATAMSS) are a coiled coil.

Its subcellular location is the nucleus. The protein resides in the cytoplasm. It is found in the cytosol. Transcriptional repressor which acts as a negative-feedback regulator of CLOCK-BMAL1 transcriptional activity in the circadian-clock mechanism. The physiological relevance of these observations is unsure. In Xenopus laevis (African clawed frog), this protein is CLOCK-interacting pacemaker (cipc).